We begin with the raw amino-acid sequence, 281 residues long: Protease HtpX homolog (281 aa).

2 helical membrane passes run valine 6–glycine 26 and serine 28–serine 48. Histidine 130 contacts Zn(2+). The active site involves glutamate 131. Histidine 134 is a Zn(2+) binding site. Transmembrane regions (helical) follow at residues valine 140–valine 160 and isoleucine 181–isoleucine 201. Zn(2+) is bound at residue glutamate 206.

This sequence belongs to the peptidase M48B family. It depends on Zn(2+) as a cofactor.

The protein localises to the cell membrane. This is Protease HtpX homolog from Pelotomaculum thermopropionicum (strain DSM 13744 / JCM 10971 / SI).